Here is a 100-residue protein sequence, read N- to C-terminus: Small ribosomal subunit protein uS14c (100 aa).

The protein belongs to the universal ribosomal protein uS14 family. In terms of assembly, part of the 30S ribosomal subunit.

The protein localises to the plastid. Its subcellular location is the chloroplast. Its function is as follows. Binds 16S rRNA, required for the assembly of 30S particles. This chain is Small ribosomal subunit protein uS14c, found in Oenothera argillicola (Appalachian evening primrose).